The chain runs to 763 residues: 1,4-alpha-glucan branching enzyme GlgB (763 aa).

The active-site Nucleophile is Asp-437. Glu-488 (proton donor) is an active-site residue.

It belongs to the glycosyl hydrolase 13 family. GlgB subfamily. Monomer.

It catalyses the reaction Transfers a segment of a (1-&gt;4)-alpha-D-glucan chain to a primary hydroxy group in a similar glucan chain.. The protein operates within glycan biosynthesis; glycogen biosynthesis. Its function is as follows. Catalyzes the formation of the alpha-1,6-glucosidic linkages in glycogen by scission of a 1,4-alpha-linked oligosaccharide from growing alpha-1,4-glucan chains and the subsequent attachment of the oligosaccharide to the alpha-1,6 position. This Synechococcus sp. (strain JA-2-3B'a(2-13)) (Cyanobacteria bacterium Yellowstone B-Prime) protein is 1,4-alpha-glucan branching enzyme GlgB.